The following is a 465-amino-acid chain: Cysteine--tRNA ligase (465 aa).

Cys-27 serves as a coordination point for Zn(2+). The short motif at Pro-29 to His-39 is the 'HIGH' region element. Positions Asp-153–Lys-173 are disordered. Zn(2+) contacts are provided by Cys-208, His-237, and Glu-241. Residues Lys-269–Ser-273 carry the 'KMSKS' region motif. Residue Lys-272 coordinates ATP.

The protein belongs to the class-I aminoacyl-tRNA synthetase family. Monomer. The cofactor is Zn(2+).

The protein resides in the cytoplasm. It carries out the reaction tRNA(Cys) + L-cysteine + ATP = L-cysteinyl-tRNA(Cys) + AMP + diphosphate. The sequence is that of Cysteine--tRNA ligase from Sulfurovum sp. (strain NBC37-1).